We begin with the raw amino-acid sequence, 152 residues long: Large ribosomal subunit protein uL15 (152 aa).

This sequence belongs to the universal ribosomal protein uL15 family. In terms of assembly, part of the 50S ribosomal subunit.

Binds to the 23S rRNA. This is Large ribosomal subunit protein uL15 from Staphylothermus marinus (strain ATCC 43588 / DSM 3639 / JCM 9404 / F1).